The chain runs to 1215 residues: Reverse gyrase 2 (1215 aa).

The RG N-terminal-type zinc-finger motif lies at G3–P44. Positions 13, 16, 31, and 34 each coordinate Zn(2+). Residues Q89 and A106 to S113 each bind ATP. A Helicase ATP-binding domain is found at A93–Y249. A DEAD box motif is present at residues D209–D212. A topoisomerase I region spans residues V614–A1215. The 166-residue stretch at T618–V783 folds into the Toprim domain. Residue E624 participates in Mg(2+) binding. Residues I702 to D729 form an RG C-terminal-type zinc finger. The Zn(2+) site is built by C705, C708, C719, and C722. D752 serves as a coordination point for Mg(2+). The 402-residue stretch at E799–V1200 folds into the Topo IA-type catalytic domain. Residue Y943 is the O-(5'-phospho-DNA)-tyrosine intermediate of the active site.

The protein in the N-terminal section; belongs to the DEAD box helicase family. DDVD subfamily. In the C-terminal section; belongs to the type IA topoisomerase family. In terms of assembly, monomer. Zn(2+) serves as cofactor. The cofactor is Mg(2+).

Its subcellular location is the cytoplasm. The enzyme catalyses ATP + H2O = ADP + phosphate + H(+). Functionally, modifies the topological state of DNA by introducing positive supercoils in an ATP-dependent process, increasing the linking number in steps of +1. Binds to single-stranded DNA, transiently cleaves and then rejoins the ends, introducing a positive supercoil in the process. The scissile phosphodiester is attacked by the catalytic tyrosine of the enzyme, resulting in the formation of a DNA-(5'-phosphotyrosyl)-enzyme intermediate. Probably involved in rewinding DNA strands in regions of the chromosome that have opened up to allow replication, transcription, DNA repair and/or for DNA protection. This is Reverse gyrase 2 from Aeropyrum pernix (strain ATCC 700893 / DSM 11879 / JCM 9820 / NBRC 100138 / K1).